A 330-amino-acid chain; its full sequence is Elongation factor Ts, mitochondrial (330 aa).

Residues 1–16 (MYRNCRKAFTFSLRHY) constitute a mitochondrion transit peptide.

It belongs to the EF-Ts family.

Its subcellular location is the mitochondrion. Its function is as follows. Associates with the EF-Tu.GDP complex and induces the exchange of GDP to GTP. It remains bound to the aminoacyl-tRNA.EF-Tu.GTP complex up to the GTP hydrolysis stage on the ribosome. This Laccaria bicolor (strain S238N-H82 / ATCC MYA-4686) (Bicoloured deceiver) protein is Elongation factor Ts, mitochondrial.